A 465-amino-acid chain; its full sequence is Flavin-containing monooxygenase FMO GS-OX-like 2 (465 aa).

18 to 23 (GAGAAG) lines the FAD pocket. 217–222 (GSSASG) is a binding site for NADP(+).

This sequence belongs to the FMO family. The cofactor is FAD.

Its function is as follows. Catalyzes the conversion of methylthioalkyl glucosinolates of any chain length into methylsulfinylalkyl glucosinolates. This chain is Flavin-containing monooxygenase FMO GS-OX-like 2, found in Arabidopsis thaliana (Mouse-ear cress).